The primary structure comprises 418 residues: NADH-quinone oxidoreductase subunit D (418 aa).

The protein belongs to the complex I 49 kDa subunit family. NDH-1 is composed of 14 different subunits. Subunits NuoB, C, D, E, F, and G constitute the peripheral sector of the complex.

The protein localises to the cell inner membrane. It carries out the reaction a quinone + NADH + 5 H(+)(in) = a quinol + NAD(+) + 4 H(+)(out). In terms of biological role, NDH-1 shuttles electrons from NADH, via FMN and iron-sulfur (Fe-S) centers, to quinones in the respiratory chain. The immediate electron acceptor for the enzyme in this species is believed to be ubiquinone. Couples the redox reaction to proton translocation (for every two electrons transferred, four hydrogen ions are translocated across the cytoplasmic membrane), and thus conserves the redox energy in a proton gradient. This is NADH-quinone oxidoreductase subunit D from Neisseria meningitidis serogroup B (strain ATCC BAA-335 / MC58).